The following is a 592-amino-acid chain: V-type ATP synthase alpha chain 2 (592 aa).

Position 237–244 (237–244 (GGFGTGKT)) interacts with ATP.

This sequence belongs to the ATPase alpha/beta chains family.

It carries out the reaction ATP + H2O + 4 H(+)(in) = ADP + phosphate + 5 H(+)(out). Its function is as follows. Produces ATP from ADP in the presence of a proton gradient across the membrane. The V-type alpha chain is a catalytic subunit. The protein is V-type ATP synthase alpha chain 2 of Clostridium tetani (strain Massachusetts / E88).